The primary structure comprises 300 residues: Mycothiol acetyltransferase (300 aa).

2 consecutive N-acetyltransferase domains span residues 4–140 and 151–300; these read IDWR…RPLT and VRLA…AVAD. Position 36 (D36) interacts with 1D-myo-inositol 2-(L-cysteinylamino)-2-deoxy-alpha-D-glucopyranoside. 79–81 provides a ligand contact to acetyl-CoA; it reads LVV. Residues E178, K219, and E227 each contribute to the 1D-myo-inositol 2-(L-cysteinylamino)-2-deoxy-alpha-D-glucopyranoside site. Acetyl-CoA is bound at residue 231–233; it reads VGV. Position 269 (Y269) interacts with 1D-myo-inositol 2-(L-cysteinylamino)-2-deoxy-alpha-D-glucopyranoside. 274 to 279 contacts acetyl-CoA; the sequence is NGAAVK.

This sequence belongs to the acetyltransferase family. MshD subfamily. As to quaternary structure, monomer.

The enzyme catalyses 1D-myo-inositol 2-(L-cysteinylamino)-2-deoxy-alpha-D-glucopyranoside + acetyl-CoA = mycothiol + CoA + H(+). Functionally, catalyzes the transfer of acetyl from acetyl-CoA to desacetylmycothiol (Cys-GlcN-Ins) to form mycothiol. The sequence is that of Mycothiol acetyltransferase from Mycobacterium sp. (strain MCS).